The following is a 275-amino-acid chain: Polyamine aminopropyltransferase 1 (275 aa).

Residues 2-235 (ELWFTEKQTK…GLWTFTIGSK (234 aa)) enclose the PABS domain. Gln-31 contacts S-methyl-5'-thioadenosine. Residues His-62 and Asp-86 each contribute to the spermidine site. Residues Glu-106 and 137–138 (DG) each bind S-methyl-5'-thioadenosine. The Proton acceptor role is filled by Asp-155. 155-158 (DSTE) provides a ligand contact to spermidine. Pro-162 is a binding site for S-methyl-5'-thioadenosine.

The protein belongs to the spermidine/spermine synthase family. Homodimer or homotetramer.

Its subcellular location is the cytoplasm. It catalyses the reaction S-adenosyl 3-(methylsulfanyl)propylamine + putrescine = S-methyl-5'-thioadenosine + spermidine + H(+). The protein operates within amine and polyamine biosynthesis; spermidine biosynthesis; spermidine from putrescine: step 1/1. Its function is as follows. Catalyzes the irreversible transfer of a propylamine group from the amino donor S-adenosylmethioninamine (decarboxy-AdoMet) to putrescine (1,4-diaminobutane) to yield spermidine. The chain is Polyamine aminopropyltransferase 1 from Bacillus cereus (strain ATCC 14579 / DSM 31 / CCUG 7414 / JCM 2152 / NBRC 15305 / NCIMB 9373 / NCTC 2599 / NRRL B-3711).